The sequence spans 430 residues: UPF0597 protein BDI_1130 (430 aa).

The protein belongs to the UPF0597 family.

In Parabacteroides distasonis (strain ATCC 8503 / DSM 20701 / CIP 104284 / JCM 5825 / NCTC 11152), this protein is UPF0597 protein BDI_1130.